The primary structure comprises 223 residues: DNA replication complex GINS protein SLD5 (223 aa).

Position 1 is an N-acetylmethionine (Met1). Thr2 is subject to N-acetylthreonine; in DNA replication complex GINS protein SLD5, N-terminally processed. Residues Ser12 and Ser16 each carry the phosphoserine modification. An important for GINS complex assembly region spans residues 166–223; it reads DLDSYVFLRVKERQENILVEPEADEQRDYVIDLEVGSQHLIRYKTIAPLVASGAVQLI.

It belongs to the GINS4/SLD5 family. As to quaternary structure, component of the CMG helicase complex, a hexameric ring of related MCM2-7 subunits stabilized by CDC45 and the tetrameric GINS complex. Associated with ORC2. Interacts with HELB. As to expression, highly abundant in testis. Weakly expressed in thymus and bone marrow.

It localises to the nucleus. The protein localises to the chromosome. Its subcellular location is the cytoplasm. Functionally, required for initiation of chromosomal DNA replication. Core component of CDC45-MCM-GINS (CMG) helicase, the molecular machine that unwinds template DNA during replication, and around which the replisome is built. The polypeptide is DNA replication complex GINS protein SLD5 (Gins4) (Mus musculus (Mouse)).